Consider the following 290-residue polypeptide: Purine nucleoside phosphorylase (290 aa).

Residue 68 to 69 (RN) coordinates phosphate. Methionine 204 lines the substrate pocket. Residue threonine 205 coordinates phosphate.

The protein belongs to the PNP/MTAP phosphorylase family. MTAP subfamily. In terms of assembly, homotrimer.

The protein localises to the cytoplasm. It localises to the nucleus. It carries out the reaction a purine D-ribonucleoside + phosphate = a purine nucleobase + alpha-D-ribose 1-phosphate. Its pathway is purine metabolism; purine nucleoside salvage. Its function is as follows. Purine nucleoside phosphorylase involved in purine salvage. In Drosophila melanogaster (Fruit fly), this protein is Purine nucleoside phosphorylase.